We begin with the raw amino-acid sequence, 372 residues long: Invasion protein InvE (372 aa).

The span at 1 to 19 (MIPGSTSGISFSRILSRQT) shows a compositional bias: polar residues. Residues 1-46 (MIPGSTSGISFSRILSRQTSHQDATQHTDAQQAEIQQAAEDSSPGA) are disordered. Residues 21-40 (HQDATQHTDAQQAEIQQAAE) are compositionally biased toward low complexity.

Its subcellular location is the cell membrane. Functionally, involved in the triggering of intracellular events that lead to microbial internalization. These events include increase in calcium level, redistribution of actin microfilaments, and changes in the normal structure of the microvilli. Encoded within the type III secretion system (SPI-1 T3SS), it is essential for the translocation of protein effectors into host cells. Forms a complex with SipB and SipC in the presence of their chaperone SicA. Positively regulates the secretion of SPI-1 T3SS effector proteins SipB, SipC and SipD and negatively influences the secretion of SipA, SopA and SptP. This chain is Invasion protein InvE (invE), found in Salmonella typhimurium (strain LT2 / SGSC1412 / ATCC 700720).